The chain runs to 285 residues: tRNA (adenine(58)-N(1))-methyltransferase catalytic subunit TRMT61A (285 aa).

N-acetylserine is present on S2. 5 substrate regions span residues 20 to 22 (LGH), 35 to 42 (QTQTRHGV), 64 to 65 (GW), 85 to 89 (QILYS), and 110 to 117 (SGTGSGSV). S-adenosyl-L-methionine contacts are provided by residues L87, 114 to 116 (SGS), E135, R140, 163 to 164 (DV), and D181. Substrate regions lie at residues 180–183 (LDIP) and 205–212 (SFSPCIEQ). A substrate-binding site is contributed by T274.

This sequence belongs to the class I-like SAM-binding methyltransferase superfamily. TRM61 family. As to quaternary structure, heterotetramer; composed of two copies of TRMT6 and two copies of TRMT61A.

It is found in the nucleus. The enzyme catalyses adenosine(58) in tRNA + S-adenosyl-L-methionine = N(1)-methyladenosine(58) in tRNA + S-adenosyl-L-homocysteine + H(+). The catalysed reaction is an adenosine in mRNA + S-adenosyl-L-methionine = an N(1)-methyladenosine in mRNA + S-adenosyl-L-homocysteine + H(+). Its function is as follows. Catalytic subunit of tRNA (adenine-N(1)-)-methyltransferase, which catalyzes the formation of N(1)-methyladenine at position 58 (m1A58) in initiator methionyl-tRNA. Catalytic subunit of mRNA N(1)-methyltransferase complex, which mediates methylation of adenosine residues at the N(1) position of a small subset of mRNAs: N(1) methylation takes place in tRNA T-loop-like structures of mRNAs and is only present at low stoichiometries. This chain is tRNA (adenine(58)-N(1))-methyltransferase catalytic subunit TRMT61A (TRMT61A), found in Bos taurus (Bovine).